A 295-amino-acid polypeptide reads, in one-letter code: 4-hydroxy-tetrahydrodipicolinate synthase (295 aa).

T47 is a binding site for pyruvate. Y135 serves as the catalytic Proton donor/acceptor. Residue K163 is the Schiff-base intermediate with substrate of the active site. A pyruvate-binding site is contributed by I206.

It belongs to the DapA family. As to quaternary structure, homodimer.

It is found in the cytoplasm. It catalyses the reaction L-aspartate 4-semialdehyde + pyruvate = (2S,4S)-4-hydroxy-2,3,4,5-tetrahydrodipicolinate + H2O + H(+). Its pathway is amino-acid biosynthesis; L-lysine biosynthesis via DAP pathway; (S)-tetrahydrodipicolinate from L-aspartate: step 3/4. Its function is as follows. Catalyzes the condensation of (S)-aspartate-beta-semialdehyde [(S)-ASA] and pyruvate to 4-hydroxy-tetrahydrodipicolinate (HTPA). In Staphylococcus saprophyticus subsp. saprophyticus (strain ATCC 15305 / DSM 20229 / NCIMB 8711 / NCTC 7292 / S-41), this protein is 4-hydroxy-tetrahydrodipicolinate synthase.